The sequence spans 747 residues: H(+)/Cl(-) exchange transporter 4 (747 aa).

Residues 1–50 (MDFLDEPFPDVGTYEDFHTIDWLREKSRDTDRHRKITSKSKESIWEFIKS) form a required for localization in the endoplasmic reticulum region. Topologically, residues 1–54 (MDFLDEPFPDVGTYEDFHTIDWLREKSRDTDRHRKITSKSKESIWEFIKSLLDA) are cytoplasmic. 2 helical membrane-spanning segments follow: residues 55 to 92 (WSGWVVMLLIGLLAGTLAGVIDLAVDWMTDLKEGVCLS) and 138 to 161 (LNYLMYILWALLFAFLAVSLVRVF). A Selectivity filter part_1 motif is present at residues 167-171 (GSGIP). Ser168 is a chloride binding site. Positions 170 to 177 (IPEIKTIL) form an intramembrane region, helical. Helical transmembrane passes span 187–205 (GKWTLLIKTVTLVLVVSSG) and 211–230 (EGPLVHVACCCGNFFSSLFS). The Selectivity filter part_2 motif lies at 209–213 (GKEGP). Intramembrane regions (helical) lie at residues 242–254 (VLSAAAAAGVSVA) and 258–266 (PIGGVLFSL). A run of 5 helical transmembrane segments spans residues 278–296 (LWRSFFAALVAAFTLRSIN), 320–345 (FPFILLGVFGGLWGTVFTRCNIAWCR), 352–372 (LGKYPVLEVIVVTAITAIIAY), 429–449 (MWQLALALIFKIVITIFTFGM), and 454–473 (GLFIPSMAVGAMAGRMVGIG). Positions 454-458 (GLFIP) match the Selectivity filter part_3 motif. Phe456 is a chloride binding site. Intramembrane regions (helical) lie at residues 501-515 (GLYAMVGAAACLGGV) and 519-530 (TVSLVVIMFELT). The segment at residues 531–534 (GGLE) is an intramembrane region (note=Loop between two helices). A helical membrane pass occupies residues 535–553 (YIVPLMAAAVTSKWVADAF). Over 554 to 747 (GKEGIYEAHI…NQDPESIIFN (194 aa)) the chain is Cytoplasmic. Tyr559 is a binding site for chloride. Positions 587–653 (MRPRRGEPPL…AIKNARQRQE (67 aa)) constitute a CBS 1 domain. ATP contacts are provided by residues Ser597 and 618–620 (YNG). The interval 654–683 (GIVSNSIMYFTEEPPELPANSPHPLKLRRI) is required for localization in the endoplasmic reticulum. A CBS 2 domain is found at 684–742 (LNLSPFTVTDHTPMETVVDIFRKLGLRQCLVTRSGRLLGIITKKDVLRHMAQMANQDPE). 725–728 (TKKD) provides a ligand contact to ATP.

It belongs to the chloride channel (TC 2.A.49) family. ClC-4/CLCN4 subfamily. Strongly expressed in liver and brain, but also in heart, muscle, kidney and spleen.

Its subcellular location is the early endosome membrane. It localises to the late endosome membrane. The protein localises to the endoplasmic reticulum membrane. It is found in the lysosome membrane. The protein resides in the recycling endosome membrane. Strongly outwardly rectifying, electrogenic H(+)/Cl(-)exchanger which mediates the exchange of chloride ions against protons. The CLC channel family contains both chloride channels and proton-coupled anion transporters that exchange chloride or another anion for protons. The presence of conserved gating glutamate residues is typical for family members that function as antiporters. In Rattus norvegicus (Rat), this protein is H(+)/Cl(-) exchange transporter 4 (Clcn4).